The sequence spans 211 residues: tRNA (pseudouridine(54)-N(1))-methyltransferase (211 aa).

The S-adenosyl-L-methionine site is built by leucine 128, glycine 150, and cysteine 183.

This sequence belongs to the methyltransferase superfamily. TrmY family. As to quaternary structure, homodimer.

It is found in the cytoplasm. The enzyme catalyses pseudouridine(54) in tRNA + S-adenosyl-L-methionine = N(1)-methylpseudouridine(54) in tRNA + S-adenosyl-L-homocysteine + H(+). Its function is as follows. Specifically catalyzes the N1-methylation of pseudouridine at position 54 (Psi54) in tRNAs. This Methanosarcina acetivorans (strain ATCC 35395 / DSM 2834 / JCM 12185 / C2A) protein is tRNA (pseudouridine(54)-N(1))-methyltransferase.